We begin with the raw amino-acid sequence, 511 residues long: 2-isopropylmalate synthase (511 aa).

The region spanning 5–267 (IQIFDTTLRD…ESQINLEETK (263 aa)) is the Pyruvate carboxyltransferase domain. Mn(2+) is bound by residues aspartate 14, histidine 202, histidine 204, and asparagine 238. The interval 391–511 (QLDNLQLQYV…EYELKEGIRT (121 aa)) is regulatory domain.

Belongs to the alpha-IPM synthase/homocitrate synthase family. LeuA type 1 subfamily. In terms of assembly, homodimer. Mn(2+) serves as cofactor.

The protein resides in the cytoplasm. The enzyme catalyses 3-methyl-2-oxobutanoate + acetyl-CoA + H2O = (2S)-2-isopropylmalate + CoA + H(+). It participates in amino-acid biosynthesis; L-leucine biosynthesis; L-leucine from 3-methyl-2-oxobutanoate: step 1/4. Its function is as follows. Catalyzes the condensation of the acetyl group of acetyl-CoA with 3-methyl-2-oxobutanoate (2-ketoisovalerate) to form 3-carboxy-3-hydroxy-4-methylpentanoate (2-isopropylmalate). The chain is 2-isopropylmalate synthase from Staphylococcus epidermidis (strain ATCC 35984 / DSM 28319 / BCRC 17069 / CCUG 31568 / BM 3577 / RP62A).